We begin with the raw amino-acid sequence, 272 residues long: Hemin import ATP-binding protein HmuV (272 aa).

Residues 2–255 (LNAEHLHVAR…DLIERCYGFR (254 aa)) enclose the ABC transporter domain. Residue 34–41 (GRNGAGKS) participates in ATP binding.

Belongs to the ABC transporter superfamily. Heme (hemin) importer (TC 3.A.1.14.5) family. As to quaternary structure, the complex is composed of two ATP-binding proteins (HmuV), two transmembrane proteins (HmuU) and a solute-binding protein (HmuT).

The protein resides in the cell inner membrane. Part of the ABC transporter complex HmuTUV involved in hemin import. Responsible for energy coupling to the transport system. The sequence is that of Hemin import ATP-binding protein HmuV from Burkholderia thailandensis (strain ATCC 700388 / DSM 13276 / CCUG 48851 / CIP 106301 / E264).